A 236-amino-acid polypeptide reads, in one-letter code: Ribosome assembly factor MRT4 (236 aa).

This sequence belongs to the universal ribosomal protein uL10 family. As to quaternary structure, associates with the pre-60S ribosomal particle.

The protein localises to the nucleus. It localises to the nucleolus. Its subcellular location is the cytoplasm. In terms of biological role, component of the ribosome assembly machinery. Nuclear paralog of the ribosomal protein P0, it binds pre-60S subunits at an early stage of assembly in the nucleolus, and is replaced by P0 in cytoplasmic pre-60S subunits and mature 80S ribosomes. The protein is Ribosome assembly factor MRT4 of Saccharomyces cerevisiae (strain ATCC 204508 / S288c) (Baker's yeast).